We begin with the raw amino-acid sequence, 116 residues long: Prefoldin subunit beta (116 aa).

The protein belongs to the prefoldin subunit beta family. Heterohexamer of two alpha and four beta subunits.

The protein resides in the cytoplasm. Its function is as follows. Molecular chaperone capable of stabilizing a range of proteins. Seems to fulfill an ATP-independent, HSP70-like function in archaeal de novo protein folding. The polypeptide is Prefoldin subunit beta (Methanobrevibacter smithii (strain ATCC 35061 / DSM 861 / OCM 144 / PS)).